The following is a 144-amino-acid chain: MPKNKGKGGKNRRRGKNENESEKRELVFKEDGQEYAQVIKMLGNGRLEAMCFDGVKRLCHIRGKLRKKVWINTSDIILVGLRDYQDNKADVILKYNADEARSLKAYGELPEHAKINETDTFGPGDDDEIQFDDIGDDDEDIDDI.

The segment covering 1–15 has biased composition (basic residues); it reads MPKNKGKGGKNRRRG. 2 disordered regions span residues 1-26 and 114-144; these read MPKN…KREL and KINE…IDDI. A compositionally biased stretch (basic and acidic residues) spans 16–26; that stretch reads KNENESEKREL. In terms of domain architecture, S1-like spans 22–96; sequence EKRELVFKED…NKADVILKYN (75 aa). Residues 124-144 are compositionally biased toward acidic residues; the sequence is GDDDEIQFDDIGDDDEDIDDI.

The protein belongs to the eIF-1A family. As to quaternary structure, component of the 43S pre-initiation complex (43S PIC), which is composed of the 40S ribosomal subunit, EIF1, eIF1A (EIF1AX), eIF3 complex, EIF5 and eIF2-GTP-initiator tRNA complex (eIF2 ternary complex). Interacts with EIF5; this interaction contributes to the maintenance of EIF1 within the open 43S PIC. Interacts through its C-terminal domain (CTD) with the CTD of EIF5B; from the location of the start codon by the 43S complex until the formation of the 80S complex. In terms of assembly, (Microbial infection) Interacts with human respiratory syncytial virus (HRSV) nucleoprotein; this interaction recruits EIF1AX to the viral replication complex to facilitate viral genomic RNA synthesis and virus production.

The protein localises to the cytoplasm. Component of the 43S pre-initiation complex (43S PIC), which binds to the mRNA cap-proximal region, scans mRNA 5'-untranslated region, and locates the initiation codon. This protein enhances formation of the cap-proximal complex. Together with EIF1, facilitates scanning, start codon recognition, promotion of the assembly of 48S complex at the initiation codon (43S PIC becomes 48S PIC after the start codon is reached), and dissociation of aberrant complexes. After start codon location, together with EIF5B orients the initiator methionine-tRNA in a conformation that allows 60S ribosomal subunit joining to form the 80S initiation complex. Is released after 80S initiation complex formation, just after GTP hydrolysis by EIF5B, and before release of EIF5B. Its globular part is located in the A site of the 40S ribosomal subunit. Its interaction with EIF5 during scanning contribute to the maintenance of EIF1 within the open 43S PIC. In contrast to yeast orthologs, does not bind EIF1. The sequence is that of Eukaryotic translation initiation factor 1A, X-chromosomal (EIF1AX) from Homo sapiens (Human).